A 462-amino-acid chain; its full sequence is MARVLGAPVALGLWSLCWSLAIATPLPPTSAHGNVAEGETKPDPDVTERCSDGWSFDATTLDDNGTMLFFKGEFVWKSHKWDRELISERWKNFPSPVDAAFRQGHNSVFLIKGDKVWVYPPEKKEKGYPKLLQDEFPGIPSPLDAAVECHRGECQAEGVLFFQGDREWFWDLATGTMKERSWPAVGNCSSALRWLGRYYCFQGNQFLRFDPVRGEVPPRYPRDVRDYFMPCPGRGHGHRNGTGHGNSTHHGPEYMRCSPHLVLSALTSDNHGATYAFSGTHYWRLDTSRDGWHSWPIAHQWPQGPSAVDAAFSWEEKLYLVQGTQVYVFLTKGGYTLVSGYPKRLEKEVGTPHGIILDSVDAAFICPGSSRLHIMAGRRLWWLDLKSGAQATWTELPWPHEKVDGALCMEKSLGPNSCSANGPGLYLIHGPNLYCYSDVEKLNAAKALPQPQNVTSLLGCTH.

The N-terminal stretch at 1–23 is a signal peptide; that stretch reads MARVLGAPVALGLWSLCWSLAIA. 2 O-linked (GalNAc...) threonine glycosylation sites follow: threonine 24 and threonine 29. A disordered region spans residues 29-48; sequence TSAHGNVAEGETKPDPDVTE. Residues 30 to 40 are O-glycosylated at one site; the sequence is SAHGNVAEGET. Over residues 38–48 the composition is skewed to basic and acidic residues; the sequence is GETKPDPDVTE. Disulfide bonds link cysteine 50-cysteine 231, cysteine 149-cysteine 154, and cysteine 188-cysteine 200. Hemopexin repeat units lie at residues 53–93, 94–139, 140–184, and 185–231; these read GWSF…WKNF, PSPV…FPGI, PSPL…SWPA, and VGNC…FMPC. Residue asparagine 64 is glycosylated (N-linked (GlcNAc...) (complex) asparagine). Histidine 79 serves as a coordination point for heme. A heme-binding site is contributed by histidine 150. Asparagine 187 carries an N-linked (GlcNAc...) (complex) asparagine glycan. Histidine 236 contributes to the heme binding site. 2 N-linked (GlcNAc...) asparagine glycosylation sites follow: asparagine 240 and asparagine 246. Cystine bridges form between cysteine 257–cysteine 460, cysteine 366–cysteine 408, and cysteine 418–cysteine 435. Hemopexin repeat units lie at residues 259–304, 305–352, 357–396, and 400–450; these read PHLV…WPQG, PSAV…VGTP, LDSVDAAFICPGSSRLHIMAGRRLWWLDLKSGAQATWTEL, and HEKV…ALPQ. Histidine 293 provides a ligand contact to heme. Asparagine 453 carries an N-linked (GlcNAc...) (complex) asparagine glycan.

The protein belongs to the hemopexin family. As to quaternary structure, interacts with FLVCR1. In terms of assembly, (Microbial infection) Interacts with hepatitis E virus/HEV protein ORF3. Post-translationally, N- and O-glycosylated. O-glycosylated with core 1 or possibly core 8 glycans. O-glycosylation in the 30-40 region is minor compared to glycosylation at Thr-24 and Thr-29. As to expression, expressed by the liver and secreted in plasma.

The protein localises to the secreted. In terms of biological role, binds heme and transports it to the liver for breakdown and iron recovery, after which the free hemopexin returns to the circulation. This chain is Hemopexin (HPX), found in Homo sapiens (Human).